The sequence spans 356 residues: 1,2-phenylacetyl-CoA epoxidase, subunit E (356 aa).

An FAD-binding FR-type domain is found at 2-106 (TTFHSLTVAK…MVPQGHFGYQ (105 aa)). Residues 112 to 228 (QGRYLAIAAG…AAMMDDAETA (117 aa)) are oxidoreductase. The 2Fe-2S ferredoxin-type domain maps to 262-354 (QKVTVRQDGR…DVVVDFDAKG (93 aa)). Positions 299, 304, 307, and 337 each coordinate [2Fe-2S] cluster.

The protein in the N-terminal section; belongs to the FAD-binding oxidoreductase type 6 family. Requires [2Fe-2S] cluster as cofactor. It depends on FAD as a cofactor.

It functions in the pathway aromatic compound metabolism; phenylacetate degradation. In terms of biological role, component of 1,2-phenylacetyl-CoA epoxidase multicomponent enzyme system which catalyzes the reduction of phenylacetyl-CoA (PA-CoA) to form 1,2-epoxyphenylacetyl-CoA. The subunit E is a reductase with a preference for NADPH and FAD, capable of reducing cytochrome c. The sequence is that of 1,2-phenylacetyl-CoA epoxidase, subunit E (paaE) from Escherichia coli (strain K12).